A 134-amino-acid polypeptide reads, in one-letter code: UPF0719 transmembrane protein YshE (134 aa).

Transmembrane regions (helical) follow at residues 10 to 30 (VEIAAYYSVAVLCLVLFLTVF), 48 to 68 (AVAMATGGKILGIANVFQHSI), 78 to 98 (IGWGVYGFVMLLISYFIFEFL), and 114 to 134 (AVGFISFVISVGLSFVVAAGI).

Belongs to the UPF0719 family.

It is found in the cell membrane. This is UPF0719 transmembrane protein YshE (yshE) from Bacillus subtilis (strain 168).